We begin with the raw amino-acid sequence, 896 residues long: MDSDEPNGSGLPPPPPFVPANLVPEVEPVKKNILLPMARPRGSGSKGQKIPLLTNHFGVKFNKPSGYFFHYSVAINYEDGRPVEAKGIGRKILDKVQETYQSDLGAKYFAYDGEKTLFTVGALPSNKLDFSVVLEEIPSSRNHAGNDTNDADRKRSRRPNQTKKFMVEISYAAKIPMQAIASALQGKETENLQDALRVLDIILRQSAARQGCLLVRQSFFHNDVKNFVPIGGGVSGCRGFHSSFRTTQGGLSLNIDTSTTMIVQPGPVVDFLLANQNKKDPYGMDWNKARRVLKNLRVQITLSNREYKISGLSEHSCKDQLFTWRKPNDKGEFEEVEITVLNYYKERNIEVRYSGDFPCINVGKPKRPTYFPIEFCNLVSLQRYTKSLTNFQRAALVEKSRQKPPERMASLTKGLKDSNYNADPVLQDSGVSIITNFTQVEGRILPTPMLKVGKGENLSPIKGKWNFMRKTLAEPTTVTRWAVVNFSARCDTNTLIRDLIKCGREKGINVEPPFKDVINENPQFRNAPATVRVENMFEQIKSKLPKPPLFLLCILAERKNSDVYGPWKKKNLVDLGIVTQCIAPTRLNDQYLTNVLLKINAKLGGLNSLLAMERSPAMPKVTQVPTIIVGMDVSHGSPGQSDIPSIAAVVSSRQWPLISKYKACVRTQSRKMEMIDNLFKPVNGKDEGMFRELLLDFYYSSENRKPEHIIIFRDGVSESQFNQVLNIELDQMMQACKFLDDTWHPKFTVIVAQKNHHTKFFQSRGPDNVPPGTIIDSQICHPRNFDFYLCAHAGMIGTTRPTHYHVLYDEIGFATDDLQELVHSLSYVYQRSTTAISVVAPVCYAHLAAAQMGTVMKYEELSETSSSHGGITTPGAVPVPPMPQLHNNVSTSMFFC.

The region spanning 267–380 is the PAZ domain; sequence PVVDFLLANQ…FPIEFCNLVS (114 aa). Residues 550-857 form the Piwi domain; that stretch reads FLLCILAERK…AAAQMGTVMK (308 aa).

It belongs to the argonaute family. Ago subfamily. In terms of tissue distribution, expressed in embryonic shoot apex region, pollen and developing ovules.

Involved in RNA-mediated post-transcriptional gene silencing (PTGS). Main component of the RNA-induced silencing complex (RISC) that binds to a short guide RNA such as a microRNA (miRNA) or small interfering RNA (siRNA). RISC uses the mature miRNA or siRNA as a guide for slicer-directed cleavage of homologous mRNAs to repress gene expression. Associates preferentially with small RNAs of 24 nucleotide in length with a 5' terminal adenosine. Interacts with 24 nucleotide sRNAs derived from transposable elements (TEs). Required to silence pericentrometric-located TEs in female gametes and their accessory cells. Necessary to inactivate a significant proportion of long terminal repeat retrotransposons (LTRs) in the ovule. Required to specify cell fate in ovule. Involved in the control of female gamete formation by restricting the specification of gametophyte precursors in a dosage-dependent, non-cell-autonomous manner. Targeted by turnip yellows virus (TuYV) protein P0 (via F-box-like domain) for probable proteasome degradation and thereby inactivating AGO9 function in RNA silencing. The chain is Protein argonaute 9 (AGO9) from Arabidopsis thaliana (Mouse-ear cress).